Consider the following 621-residue polypeptide: F-box/LRR-repeat protein 4 (621 aa).

The residue at position 28 (arginine 28) is an Asymmetric dimethylarginine. The 56-residue stretch at asparagine 277–leucine 332 folds into the F-box domain. 9 LRR repeats span residues glutamate 376–serine 397, asparagine 402–histidine 421, serine 427–asparagine 448, glutamate 452–isoleucine 474, lysine 480–alanine 501, cysteine 504–cysteine 524, leucine 532–cysteine 558, threonine 559–serine 583, and cysteine 584–serine 609.

In terms of assembly, part of a SCF (SKP1-CUL1-F-box) protein ligase complex. Interacts with VCP. Interacts with PPTC7; this interaction promotes destruction of BNIP3 and NIX and mitophagy suppression. Expressed in heart, kidney, liver, lung, pancreas, and placenta, but not in skeletal muscle.

The protein resides in the cytoplasm. Its subcellular location is the nucleus. It is found in the mitochondrion outer membrane. In terms of biological role, substrate-recognition component of the mitochondria-localized SCF-FBXL4 ubiquitin E3 ligase complex that plays a role in the restriction of mitophagy by controlling the degradation of BNIP3 and NIX mitophagy receptors. Rescues also mitochondrial injury through reverting hyperactivation of DRP1-mediated mitochondrial fission. This is F-box/LRR-repeat protein 4 (FBXL4) from Homo sapiens (Human).